A 199-amino-acid chain; its full sequence is NAD(P)H-quinone oxidoreductase chain 6 (199 aa).

A run of 5 helical transmembrane segments spans residues Ile9–Leu29, Val32–Leu52, Ala61–Val81, Leu102–Ile122, and Phe143–Val163.

The protein belongs to the complex I subunit 6 family.

Its subcellular location is the membrane. The catalysed reaction is a plastoquinone + NADH + (n+1) H(+)(in) = a plastoquinol + NAD(+) + n H(+)(out). The enzyme catalyses a plastoquinone + NADPH + (n+1) H(+)(in) = a plastoquinol + NADP(+) + n H(+)(out). Its function is as follows. NDH-1 shuttles electrons from NAD(P)H, via FMN and iron-sulfur (Fe-S) centers, to quinones in the respiratory chain. The immediate electron acceptor for the enzyme in this species is believed to be plastoquinone. Couples the redox reaction to proton translocation (for every two electrons transferred, four hydrogen ions are translocated across the cytoplasmic membrane), and thus conserves the redox energy in a proton gradient. This Leptolyngbya boryana (Plectonema boryanum) protein is NAD(P)H-quinone oxidoreductase chain 6 (ndhG).